We begin with the raw amino-acid sequence, 159 residues long: MAPKGSERTVKKVVAENRKARFNYEIVDTYEAGLVLTGTEVKSLREGKANIAESYATDEGGEIWLINSYLPEYLQANRFNHETRRRRKLLLSRREVNRLQGAVNREGMSLIPLRIYFNERGRAKLELALGKGKKLHDKRETSKERDWNRQKNRLLKERG.

A disordered region spans residues 133–159 (KKLHDKRETSKERDWNRQKNRLLKERG). Basic and acidic residues predominate over residues 137 to 159 (DKRETSKERDWNRQKNRLLKERG).

This sequence belongs to the SmpB family.

The protein localises to the cytoplasm. Functionally, required for rescue of stalled ribosomes mediated by trans-translation. Binds to transfer-messenger RNA (tmRNA), required for stable association of tmRNA with ribosomes. tmRNA and SmpB together mimic tRNA shape, replacing the anticodon stem-loop with SmpB. tmRNA is encoded by the ssrA gene; the 2 termini fold to resemble tRNA(Ala) and it encodes a 'tag peptide', a short internal open reading frame. During trans-translation Ala-aminoacylated tmRNA acts like a tRNA, entering the A-site of stalled ribosomes, displacing the stalled mRNA. The ribosome then switches to translate the ORF on the tmRNA; the nascent peptide is terminated with the 'tag peptide' encoded by the tmRNA and targeted for degradation. The ribosome is freed to recommence translation, which seems to be the essential function of trans-translation. The polypeptide is SsrA-binding protein (Sinorhizobium medicae (strain WSM419) (Ensifer medicae)).